A 197-amino-acid chain; its full sequence is 3-isopropylmalate dehydratase small subunit (197 aa).

It belongs to the LeuD family. LeuD type 1 subfamily. As to quaternary structure, heterodimer of LeuC and LeuD.

The enzyme catalyses (2R,3S)-3-isopropylmalate = (2S)-2-isopropylmalate. It participates in amino-acid biosynthesis; L-leucine biosynthesis; L-leucine from 3-methyl-2-oxobutanoate: step 2/4. Functionally, catalyzes the isomerization between 2-isopropylmalate and 3-isopropylmalate, via the formation of 2-isopropylmaleate. The polypeptide is 3-isopropylmalate dehydratase small subunit (Streptomyces avermitilis (strain ATCC 31267 / DSM 46492 / JCM 5070 / NBRC 14893 / NCIMB 12804 / NRRL 8165 / MA-4680)).